Consider the following 263-residue polypeptide: Regulatory protein RecX (263 aa).

The protein belongs to the RecX family.

Its subcellular location is the cytoplasm. Modulates RecA activity. The protein is Regulatory protein RecX of Bacillus velezensis (strain DSM 23117 / BGSC 10A6 / LMG 26770 / FZB42) (Bacillus amyloliquefaciens subsp. plantarum).